The primary structure comprises 346 residues: 3 beta-hydroxysteroid dehydrogenase/Delta 5--&gt;4-isomerase (346 aa).

Y147 functions as the Proton acceptor in the catalytic mechanism. An NAD(+)-binding site is contributed by K151.

This sequence belongs to the 3-beta-HSD family.

The catalysed reaction is a 3beta-hydroxy-Delta(5)-steroid + NAD(+) = a 3-oxo-Delta(5)-steroid + NADH + H(+). The enzyme catalyses a 3-oxo-Delta(5)-steroid = a 3-oxo-Delta(4)-steroid. It functions in the pathway lipid metabolism; steroid biosynthesis. Catalyzes the oxidative conversion of Delta(5)-ene-3-beta-hydroxy steroid, and the oxidative conversion of ketosteroids. The 3-beta-HSD enzymatic system plays a crucial role in the biosynthesis of all classes of hormonal steroids. During viral infection, steroid production contributes to virulence by inhibiting the host inflammatory response. The protein is 3 beta-hydroxysteroid dehydrogenase/Delta 5--&gt;4-isomerase (OPG174) of Monkeypox virus.